We begin with the raw amino-acid sequence, 309 residues long: MSKELVFGHQNPDTDAIVAAKAFSYYENKMGADTEAVALGEPNEETQFVLDYFDEPALRVITKASDEVDSVMLVDHNEPQQSVSDIADVTVSHVVDHHRIAGFDTAQPLFYRAEPLGCCSTVIYKLFKENDIEIPAKLAGLMLSAIISDTLLLKSPTTTETDVAVVKDLAKIADIDYETYGLAMLKAGTNLDSKTEKELIDADAKSFEMAGKTVRVAQINTVDLDDVFKRQAALEAAAKDENASDGYDLFLILATNILDSNSELLVVGNPTEPVEKAFGKTIANNRLSLPGVVSRKKQVVPQLTDAFNA.

Mn(2+) contacts are provided by His-9, Asp-13, Asp-15, Asp-75, His-97, and Asp-149.

The protein belongs to the PPase class C family. Mn(2+) serves as cofactor.

The protein localises to the cytoplasm. It carries out the reaction diphosphate + H2O = 2 phosphate + H(+). This chain is Probable manganese-dependent inorganic pyrophosphatase, found in Lactiplantibacillus plantarum (strain ATCC BAA-793 / NCIMB 8826 / WCFS1) (Lactobacillus plantarum).